The primary structure comprises 845 residues: uncharacterized protein (845 aa).

2 disordered regions span residues 17 to 37 and 550 to 573; these read RRKQDALHSPSLNMDKKNDQP and AATEAEVEDQNSERNDDNALNESL. The stretch at 622-707 forms a coiled coil; that stretch reads LSEQRFEREN…ELKKSNEHTR (86 aa).

This is an uncharacterized protein from Saccharum officinarum (Sugarcane).